Here is a 136-residue protein sequence, read N- to C-terminus: Large ribosomal subunit protein bL17 (136 aa).

Belongs to the bacterial ribosomal protein bL17 family. In terms of assembly, part of the 50S ribosomal subunit. Contacts protein L32.

The polypeptide is Large ribosomal subunit protein bL17 (Rhodopseudomonas palustris (strain BisB5)).